The following is a 623-amino-acid chain: E3 ubiquitin-protein ligase DTX1 (623 aa).

WWE domains lie at 13–93 and 94–170; these read HNFG…PVRR and NFFE…RLRR. The interval 224–319 is disordered; that stretch reads KVPSGPPPAL…RASIPPGVPA (96 aa). The segment covering 227-242 has biased composition (pro residues); the sequence is SGPPPALPPPPPPPIH. A compositionally biased stretch (polar residues) spans 292-311; sequence GQNNLNRPGEQRTSGSSSRA. The RING-type zinc finger occupies 413–474; that stretch reads CTICMERLVT…DGSLQCPTCK (62 aa).

It belongs to the Deltex family. May form a homo- or heterodimer with other members of the Deltex family. Probably interacts with Notch1. Specifically expressed in regions undergoing neuronal differentiation. Mainly colocalizes with Notch1.

It carries out the reaction S-ubiquitinyl-[E2 ubiquitin-conjugating enzyme]-L-cysteine + [acceptor protein]-L-lysine = [E2 ubiquitin-conjugating enzyme]-L-cysteine + N(6)-ubiquitinyl-[acceptor protein]-L-lysine.. Its pathway is protein modification; protein ubiquitination. In terms of biological role, regulator of Notch signaling, a signaling pathway involved in cell-cell communications that regulates a broad spectrum of cell-fate determinations. Probably acts both as a positive and negative regulator of Notch, depending on the developmental and cell context. Functions as a ubiquitin ligase protein in vivo, mediating ubiquitination and promoting degradation of MEKK1, suggesting that it may regulate the Notch pathway via some ubiquitin ligase activity. This Xenopus laevis (African clawed frog) protein is E3 ubiquitin-protein ligase DTX1 (dtx1).